Here is a 288-residue protein sequence, read N- to C-terminus: Fibroblast growth factor 2 (288 aa).

A propeptide spanning residues 1-142 is cleaved from the precursor; that stretch reads MVGVGGGDVE…TMAAGSITTL (142 aa). The tract at residues 1–156 is disordered; that stretch reads MVGVGGGDVE…EDGGSGAFPP (156 aa). A compositionally biased stretch (basic and acidic residues) spans 72–84; sequence ERPSGSRLGDHGR. Omega-N-methylarginine; alternate occurs at positions 108, 110, and 112. 3 positions are modified to symmetric dimethylarginine; alternate: arginine 108, arginine 110, and arginine 112. Positions 113–132 are enriched in low complexity; it reads GTAAPRAAPAARGSRPGPAG. Asparagine 169 serves as a coordination point for heparin. The Cell attachment site; atypical signature appears at 179-181; it reads DGR. Tyrosine 215 is modified (phosphotyrosine; by TEC). The Cell attachment site; atypical signature appears at 221–223; it reads DGR. Lysine 228 is covalently cross-linked (Glycyl lysine isopeptide (Lys-Gly) (interchain with G-Cter in SUMO1)). The segment at 261 to 277 is heparin-binding; the sequence is KRTGQYKLGSKTGPGQK.

Belongs to the heparin-binding growth factors family. Monomer. Homodimer. Interacts with FGFR1, FGFR2, FGFR3 and FGFR4. Affinity between fibroblast growth factors (FGFs) and their receptors is increased by heparan sulfate glycosaminoglycans that function as coreceptors. Interacts with CSPG4, FGFBP1 and TEC. Found in a complex with FGFBP1, FGF1 and FGF2. Interacts with FGFBP3. Interacts with integrin ITGAV:ITGB3; the interaction is required for FGF2 signaling. Interacts with SNORC (via the extracellular domain). Interacts with glypican GPC3. Phosphorylation at Tyr-215 regulates FGF2 unconventional secretion.

Its subcellular location is the secreted. The protein resides in the nucleus. Its function is as follows. Acts as a ligand for FGFR1, FGFR2, FGFR3 and FGFR4. Also acts as an integrin ligand which is required for FGF2 signaling. Binds to integrin ITGAV:ITGB3. Plays an important role in the regulation of cell survival, cell division, cell differentiation and cell migration. Functions as a potent mitogen in vitro. Can induce angiogenesis. Mediates phosphorylation of ERK1/2 and thereby promotes retinal lens fiber differentiation. In Pan troglodytes (Chimpanzee), this protein is Fibroblast growth factor 2.